The following is a 450-amino-acid chain: Bifunctional protein GlmU (450 aa).

The segment at Met-1–Arg-226 is pyrophosphorylase. Residues Leu-7–Gly-10, Lys-21, Gln-73, and Gly-78–Thr-79 contribute to the UDP-N-acetyl-alpha-D-glucosamine site. Position 103 (Asp-103) interacts with Mg(2+). Residues Gly-140, Glu-155, Asn-170, and Asn-224 each contribute to the UDP-N-acetyl-alpha-D-glucosamine site. Asn-224 provides a ligand contact to Mg(2+). Positions Gln-227 to Glu-247 are linker. Positions Gly-248–Gly-450 are N-acetyltransferase. Residues Arg-329 and Lys-347 each coordinate UDP-N-acetyl-alpha-D-glucosamine. The Proton acceptor role is filled by His-359. Residues Tyr-362 and Asn-373 each contribute to the UDP-N-acetyl-alpha-D-glucosamine site. Residues Ala-376, Asn-382 to Tyr-383, Ala-419, and Arg-436 each bind acetyl-CoA.

In the N-terminal section; belongs to the N-acetylglucosamine-1-phosphate uridyltransferase family. The protein in the C-terminal section; belongs to the transferase hexapeptide repeat family. As to quaternary structure, homotrimer. It depends on Mg(2+) as a cofactor.

The protein resides in the cytoplasm. The catalysed reaction is alpha-D-glucosamine 1-phosphate + acetyl-CoA = N-acetyl-alpha-D-glucosamine 1-phosphate + CoA + H(+). It catalyses the reaction N-acetyl-alpha-D-glucosamine 1-phosphate + UTP + H(+) = UDP-N-acetyl-alpha-D-glucosamine + diphosphate. It functions in the pathway nucleotide-sugar biosynthesis; UDP-N-acetyl-alpha-D-glucosamine biosynthesis; N-acetyl-alpha-D-glucosamine 1-phosphate from alpha-D-glucosamine 6-phosphate (route II): step 2/2. The protein operates within nucleotide-sugar biosynthesis; UDP-N-acetyl-alpha-D-glucosamine biosynthesis; UDP-N-acetyl-alpha-D-glucosamine from N-acetyl-alpha-D-glucosamine 1-phosphate: step 1/1. It participates in bacterial outer membrane biogenesis; LPS lipid A biosynthesis. Catalyzes the last two sequential reactions in the de novo biosynthetic pathway for UDP-N-acetylglucosamine (UDP-GlcNAc). The C-terminal domain catalyzes the transfer of acetyl group from acetyl coenzyme A to glucosamine-1-phosphate (GlcN-1-P) to produce N-acetylglucosamine-1-phosphate (GlcNAc-1-P), which is converted into UDP-GlcNAc by the transfer of uridine 5-monophosphate (from uridine 5-triphosphate), a reaction catalyzed by the N-terminal domain. The chain is Bifunctional protein GlmU from Synechococcus sp. (strain RCC307).